Consider the following 88-residue polypeptide: Small ribosomal subunit protein bS20 (88 aa).

Disordered stretches follow at residues 1–29 (MANT…SKLR) and 69–88 (KNTA…AMAA).

Belongs to the bacterial ribosomal protein bS20 family.

In terms of biological role, binds directly to 16S ribosomal RNA. The protein is Small ribosomal subunit protein bS20 of Polynucleobacter asymbioticus (strain DSM 18221 / CIP 109841 / QLW-P1DMWA-1) (Polynucleobacter necessarius subsp. asymbioticus).